A 311-amino-acid polypeptide reads, in one-letter code: Methionyl-tRNA formyltransferase (311 aa).

Position 110–113 (110–113) interacts with (6S)-5,6,7,8-tetrahydrofolate; that stretch reads SLLP.

This sequence belongs to the Fmt family.

It carries out the reaction L-methionyl-tRNA(fMet) + (6R)-10-formyltetrahydrofolate = N-formyl-L-methionyl-tRNA(fMet) + (6S)-5,6,7,8-tetrahydrofolate + H(+). In terms of biological role, attaches a formyl group to the free amino group of methionyl-tRNA(fMet). The formyl group appears to play a dual role in the initiator identity of N-formylmethionyl-tRNA by promoting its recognition by IF2 and preventing the misappropriation of this tRNA by the elongation apparatus. The chain is Methionyl-tRNA formyltransferase from Sulfurihydrogenibium sp. (strain YO3AOP1).